Consider the following 1188-residue polypeptide: DNA-directed RNA polymerase subunit beta (1188 aa).

Belongs to the RNA polymerase beta chain family. The RNAP catalytic core consists of 2 alpha, 1 beta, 1 beta' and 1 omega subunit. When a sigma factor is associated with the core the holoenzyme is formed, which can initiate transcription.

The enzyme catalyses RNA(n) + a ribonucleoside 5'-triphosphate = RNA(n+1) + diphosphate. DNA-dependent RNA polymerase catalyzes the transcription of DNA into RNA using the four ribonucleoside triphosphates as substrates. This Streptococcus pyogenes serotype M3 (strain ATCC BAA-595 / MGAS315) protein is DNA-directed RNA polymerase subunit beta.